The chain runs to 529 residues: DNA-binding protein (529 aa).

Over residues 1-17 (MASREEEQRETTPERGR) the composition is skewed to basic and acidic residues. Disordered regions lie at residues 1-108 (MASR…VDSE) and 125-168 (PVLI…SEST). The span at 129-139 (KHGKGGKRTVR) shows a compositional bias: basic residues. The span at 140-155 (RLNEDDPVARGMRTQE) shows a compositional bias: basic and acidic residues. Residues 156–165 (EKEESSEAES) are compositionally biased toward acidic residues. Phosphotyrosine; by host is present on Tyr-195. 2 residues coordinate Zn(2+): Cys-284 and His-286. The segment at 297–331 (IEMDVTSENGQRALKEQSSKAKIVKNRWGRNVVQI) is flexible loop. Cys-339, Cys-355, Cys-396, Cys-398, Cys-450, and Cys-467 together coordinate Zn(2+). A C-terminal arm, DBP binding region spans residues 513-529 (VSLPVAHSDARQNPFDF).

This sequence belongs to the adenoviridae E2A DNA-binding protein family. As to quaternary structure, homomultimerizes on viral ssDNA bound to pTP. Forms an initiation complex with viral polymerase, pTP and hosts NFIA and POU2F1/OCT1. Interacts with host SRCAP.

Its subcellular location is the host nucleus. Its function is as follows. Plays a role in the elongation phase of viral strand displacement replication by unwinding the template in an ATP-independent fashion, employing its capacity to form multimers. Also enhances the rate of initiation. Released from template upon second strand synthesis. Assembles in complex with viral pTP, viral pol, host NFIA and host POU2F1/OCT1 on viral origin of replication. Covers the whole ssDNA genome during synthesis. The complementary strand synthesis induces its release from DNA template. May inhibit cellular transcription mediated by the interaction between host SRCAP and CBP. The sequence is that of DNA-binding protein from Human adenovirus C serotype 2 (HAdV-2).